The sequence spans 238 residues: Survival of motor neuron-related-splicing factor 30 (238 aa).

A Tudor domain is found at 72–132 (SWKVGEKCMA…RPVEEGRKAK (61 aa)). The Nuclear localization signal signature appears at 142 to 160 (KKEMIAAQREYKKKKALKK).

It belongs to the SMN family. In terms of assembly, associates with spliceosomes.

Its subcellular location is the nucleus speckle. The protein resides in the nucleus. The protein localises to the cajal body. Involved in spliceosome assembly. This chain is Survival of motor neuron-related-splicing factor 30 (smndc1), found in Xenopus tropicalis (Western clawed frog).